We begin with the raw amino-acid sequence, 214 residues long: Guanylate kinase (214 aa).

The region spanning 12 to 191 (GLMLVMSSPS…SIAAVQAILA (180 aa)) is the Guanylate kinase-like domain. 19-26 (SPSGAGKT) is an ATP binding site.

It belongs to the guanylate kinase family.

The protein resides in the cytoplasm. It carries out the reaction GMP + ATP = GDP + ADP. Functionally, essential for recycling GMP and indirectly, cGMP. This chain is Guanylate kinase, found in Paramagnetospirillum magneticum (strain ATCC 700264 / AMB-1) (Magnetospirillum magneticum).